A 1446-amino-acid chain; its full sequence is MDDAGEIHALGGSLRREASSARSGDAAVFFSRSSSRDEDDEEALRWAALEKLPTYDRARTAVLAMPEGELREVNVQRLGPQERHALLQRLAWVGDDHARFLSKFKDRVDRVGIELPTIEVRYENLNVEAEAYVGSRGLPTILNTYANVLEGLANTLHITPNRKQKISILHNVSGIIKPHRMTLLLGPPGAGKTTLLLALAGNVPSGLKVSGQITYNGHTMDEFEPRRSAAYVSQHDLHMGELTVRETVNFSAKCQGIGHRYDLLMELSRREKEENIKPDPEVDIYLKAAATGEQKAEVVTNHILKVLGLDICADTIVGNNMLRGISGGQKKRVTTAEMIVTPGRALFMDEISTGLDSSTTYNIVDSIRQTIHIVGGTAVIALLQPAPETYELFDDIILLSDGQVVYNGPREHVLEFFESVGFKCPERKGVADFLQEVTSRKDQRQYWMHGDETYRYVPVKEFAEAFQSFHVGQAIRSELAIPFDKSRSHPAALKTSKYGASMKELLKANIDREILLMKRNSFVYIFKATQLTLMTFIAMTVFIRTNMHHDSITNGGIYMGALFFGILMIMFNGLAEVGLTIAKLPVFFKQRDLLFYPAWTYSLPSWIIKTPLSLLNVTIWVFITYYVIGFDPNVERLFRQFLLLLVMNETSSGLFRFIAGFARHQVVASTMGSFCILIFMLLGGFILSRENVKKWWIWGYWISPLMYAQNAISVNEFLGHSWNKTIPGFREPLGKLVLESRGVFPEAKWYWIGVGALLGYVLLFNILYTICLTFLNPFDSNQPTISEETLKIKQANLTGDVIEASSRGRITTNTNTADDSNDEAISNHATVNSSPGKKGMVLPFVPLSITFEDIRYSVDMPEVIKAQGVTESRLELLKGISGSFRPGVLTALMGVSGAGKTTLMDVLAGRKTSGYIEGNITISGYPKKQETFARVSGYCEQNDIHSPNVTVYESLAFSAWLRLPAEIDSATRKMFIDEVMELVELSPLKDSLVGLPGVSGLSTEQRKRLTIAVELVANPSIIFMDEPTSGLDARAAAIVMRAIRNTVDTGRTVVCTIHQPSIDIFESFDELFLMKRGGEEIYVGPVGQHSCELIRYFESIEGVSKIKHGYNPSTWMLEVTSTVQEQITGVNFSEIYKNSELYRRNKSMIKELSSPPDGSSDLSFPTEYSQTFITQCLACLWKQSLSYWRNPPYTAVKYFYTIVIALLFGTMFWGVGRKRSNQQDLFNAMGSMYASVLFMGVQNSSSVQPVVSVERTVFYRERAAHMYSPLPYALGQVAIELPYILVQSLIYGVLVYAMIGFEWTAAKFFWYLFFMYFTLSYYTFYGMMSVGLTPSYNVASVVSTAFYAIWNLFSGFIIPRTRIPIWWRWYYWVCPVAWTLYGLVTSQFGDVTDTFDNGVRISDFVESYFGYHRDFLWVVAVMVVSFAVLFAFLFGLSIKIFNFQKR.

The ABC transporter 1 domain maps to 153–426; sequence ANTLHITPNR…FESVGFKCPE (274 aa). 186–193 is a binding site for ATP; it reads GPPGAGKT. The ABC transmembrane type-2 1 domain maps to 504–717; it reads ELLKANIDRE…AQNAISVNEF (214 aa). 6 helical membrane-spanning segments follow: residues 523-543, 555-575, 610-630, 641-661, 666-686, and 752-772; these read VYIF…TVFI, GGIY…NGLA, TPLS…VIGF, FLLL…IAGF, VVAS…GGFI, and IGVG…TICL. An ABC transporter 2 domain is found at 849-1101; that stretch reads ITFEDIRYSV…ELIRYFESIE (253 aa). ATP is bound at residue 894–901; that stretch reads GVSGAGKT. In terms of domain architecture, ABC transmembrane type-2 2 spans 1174–1388; the sequence is TQCLACLWKQ…TLYGLVTSQF (215 aa). A run of 7 helical transmembrane segments spans residues 1195–1215, 1225–1242, 1281–1301, 1308–1328, 1338–1358, 1363–1383, and 1415–1435; these read AVKY…FWGV, LFNA…MGVQ, LPYI…MIGF, FFWY…YGMM, VASV…GFII, IPIW…LYGL, and FLWV…FLFG.

It belongs to the ABC transporter superfamily. ABCG family. PDR (TC 3.A.1.205) subfamily.

Its subcellular location is the membrane. Its function is as follows. May be a general defense protein. The sequence is that of ABC transporter G family member 53 from Oryza sativa subsp. japonica (Rice).